The sequence spans 358 residues: Dual-specificity RNA methyltransferase RlmN (358 aa).

The active-site Proton acceptor is the E91. In terms of domain architecture, Radical SAM core spans 98–335 (SQGRITQCLS…AIIRKSKGAD (238 aa)). The cysteines at positions 105 and 340 are disulfide-linked. Residues C112, C116, and C119 each contribute to the [4Fe-4S] cluster site. S-adenosyl-L-methionine contacts are provided by residues 164 to 165 (GE), S196, 219 to 221 (SLH), and N295. The active-site S-methylcysteine intermediate is C340.

Belongs to the radical SAM superfamily. RlmN family. Requires [4Fe-4S] cluster as cofactor.

Its subcellular location is the cytoplasm. The catalysed reaction is adenosine(2503) in 23S rRNA + 2 reduced [2Fe-2S]-[ferredoxin] + 2 S-adenosyl-L-methionine = 2-methyladenosine(2503) in 23S rRNA + 5'-deoxyadenosine + L-methionine + 2 oxidized [2Fe-2S]-[ferredoxin] + S-adenosyl-L-homocysteine. It carries out the reaction adenosine(37) in tRNA + 2 reduced [2Fe-2S]-[ferredoxin] + 2 S-adenosyl-L-methionine = 2-methyladenosine(37) in tRNA + 5'-deoxyadenosine + L-methionine + 2 oxidized [2Fe-2S]-[ferredoxin] + S-adenosyl-L-homocysteine. Specifically methylates position 2 of adenine 2503 in 23S rRNA and position 2 of adenine 37 in tRNAs. m2A2503 modification seems to play a crucial role in the proofreading step occurring at the peptidyl transferase center and thus would serve to optimize ribosomal fidelity. This is Dual-specificity RNA methyltransferase RlmN from Oleidesulfovibrio alaskensis (strain ATCC BAA-1058 / DSM 17464 / G20) (Desulfovibrio alaskensis).